A 472-amino-acid chain; its full sequence is GTPase HflX (472 aa).

The interval 1–21 is disordered; that stretch reads MDTIDTPGEQGSQSFGNSLGA. Positions 230 to 396 constitute a Hflx-type G domain; the sequence is PTFALIGYTN…LMTEIIQEKS (167 aa). GTP contacts are provided by residues 236 to 243, 261 to 265, 283 to 286, 349 to 352, and 374 to 376; these read GYTNSGKS, FATLD, DTVG, NKVD, and SAK. Ser243 and Thr263 together coordinate Mg(2+).

The protein belongs to the TRAFAC class OBG-HflX-like GTPase superfamily. HflX GTPase family. In terms of assembly, monomer. Associates with the 50S ribosomal subunit. Mg(2+) serves as cofactor.

The protein resides in the cytoplasm. Its function is as follows. GTPase that associates with the 50S ribosomal subunit and may have a role during protein synthesis or ribosome biogenesis. Specific for GTP. This Chlamydia pneumoniae (Chlamydophila pneumoniae) protein is GTPase HflX.